Consider the following 381-residue polypeptide: p55-v-Fos-transforming protein (381 aa).

The region spanning 137–200 is the bZIP domain; that stretch reads EEKRRIRRER…EKLEFILAAH (64 aa). Residues 139 to 159 form a basic motif region; it reads KRRIRRERNKMAAAKCRNRRR. Residues 165–193 form a leucine-zipper region; sequence LQAETDQLEDKKSALQTEIANLLKEKEKL.

Belongs to the bZIP family. Fos subfamily.

The protein resides in the host nucleus. The polypeptide is p55-v-Fos-transforming protein (V-FOS) (Mus musculus (Mouse)).